The primary structure comprises 532 residues: Probable 1,4-beta-D-glucan cellobiohydrolase B (532 aa).

An N-terminal signal peptide occupies residues 1–26 (MLASTFSYRMYKTALILAALLGSGQA). The tract at residues 27-461 (QQVGTSQAEV…SNIKVGPIGS (435 aa)) is catalytic. Residue Glu238 is the Nucleophile of the active site. Residue Glu243 is the Proton donor of the active site. Asn296 carries N-linked (GlcNAc...) asparagine glycosylation. The interval 462-495 (TFNSGGSNPGGGTTTTTTTQPTTTTTTAGNPGGT) is disordered. The segment at 462–496 (TFNSGGSNPGGGTTTTTTTQPTTTTTTAGNPGGTG) is thr-rich linker. Residues 475–490 (TTTTTTQPTTTTTTAG) show a composition bias toward low complexity. One can recognise a CBM1 domain in the interval 496–532 (GVAQHYGQCGGIGWTGPTTCASPYTCQKLNDYYSQCL). Intrachain disulfides connect Cys504/Cys521 and Cys515/Cys531.

Belongs to the glycosyl hydrolase 7 (cellulase C) family.

The protein localises to the secreted. It catalyses the reaction Hydrolysis of (1-&gt;4)-beta-D-glucosidic linkages in cellulose and cellotetraose, releasing cellobiose from the non-reducing ends of the chains.. In terms of biological role, the biological conversion of cellulose to glucose generally requires three types of hydrolytic enzymes: (1) Endoglucanases which cut internal beta-1,4-glucosidic bonds; (2) Exocellobiohydrolases that cut the disaccharide cellobiose from the non-reducing end of the cellulose polymer chain; (3) Beta-1,4-glucosidases which hydrolyze the cellobiose and other short cello-oligosaccharides to glucose. This chain is Probable 1,4-beta-D-glucan cellobiohydrolase B (cbhB), found in Aspergillus fumigatus (strain CBS 144.89 / FGSC A1163 / CEA10) (Neosartorya fumigata).